Here is a 161-residue protein sequence, read N- to C-terminus: Globin CTT-IX (161 aa).

Residues 1–16 (MKFFIVLALCIVGAIA) form the signal peptide. The Globin domain maps to 18–161 (PVSSDQANAI…NIFGMIFAHL (144 aa)). The heme b site is built by histidine 76 and histidine 111.

The protein belongs to the globin family. As to quaternary structure, homodimer.

In Chironomus thummi thummi (Midge), this protein is Globin CTT-IX (CTT-9).